Reading from the N-terminus, the 314-residue chain is Methionyl-tRNA formyltransferase (314 aa).

112–115 (SLLP) serves as a coordination point for (6S)-5,6,7,8-tetrahydrofolate.

Belongs to the Fmt family.

It carries out the reaction L-methionyl-tRNA(fMet) + (6R)-10-formyltetrahydrofolate = N-formyl-L-methionyl-tRNA(fMet) + (6S)-5,6,7,8-tetrahydrofolate + H(+). Attaches a formyl group to the free amino group of methionyl-tRNA(fMet). The formyl group appears to play a dual role in the initiator identity of N-formylmethionyl-tRNA by promoting its recognition by IF2 and preventing the misappropriation of this tRNA by the elongation apparatus. The chain is Methionyl-tRNA formyltransferase from Legionella pneumophila (strain Paris).